A 265-amino-acid polypeptide reads, in one-letter code: Osteoclast-associated immunoglobulin-like receptor (265 aa).

The N-terminal stretch at 1–18 (MVLSLILQLSTLWPACRA) is a signal peptide. Residues 19–231 (DFTPTAPLAS…LDYTQGNLIR (213 aa)) lie on the Extracellular side of the membrane. Ig-like domains follow at residues 22–115 (PTAP…SQPS) and 125–218 (QLPR…SFEG). An N-linked (GlcNAc...) asparagine glycan is attached at N47. C52 and C99 are disulfide-bonded. The N-linked (GlcNAc...) asparagine glycan is linked to N144. The helical transmembrane segment at 232 to 248 (LGLAGMVLICLGIIVTC) threads the bilayer. Topologically, residues 249–265 (DWHSRSSAFDGLLPQQN) are cytoplasmic.

It belongs to the leukocyte receptor complex/polymeric immunoglobulin receptor (PIR/LRC) family. As to expression, specifically expressed in preosteoclasts or mature osteoclasts.

Its subcellular location is the cell membrane. In terms of biological role, regulator of osteoclastogenesis which plays an important bone-specific function in osteoclast differentiation. This is Osteoclast-associated immunoglobulin-like receptor (Oscar) from Mus musculus (Mouse).